A 344-amino-acid chain; its full sequence is MTQSQQSHRKDEHVFLAEKYFQSVAHAGFDQVRLLHRALPETTMAAVDLKPDLPFNWQWPIYINAMTGGSPQTGKLNAQLGQLAQALGVAIASGSQSVALRDPQLVPTFATLRDHDPNGFILANVGAGHHATAAEAAVAMLKANALEIHLNAAQEVVMPEGDRDFMWQANIKSIIATSQVPIVVKEVGNGFIREDLQSLQQLGVQFVDVGGRGGTNFATIENARRSGHDFAYLQDWGQTTVESLLEARGLGLTMLATGGVRSPLDVVKALRLGAHAVGMSGMVLHHLIQTGYEATLAYFQNFLHQLRQLYALLGVTNWQELQEAPIVLSADLEHYRQARGLPGI.

Position 9–10 (9–10) interacts with substrate; that stretch reads RK. Residues 65-67, serine 95, and asparagine 124 contribute to the FMN site; that span reads AMT. Glutamine 154 serves as a coordination point for substrate. Position 155 (glutamate 155) interacts with Mg(2+). FMN contacts are provided by residues lysine 185, threonine 215, 259 to 261, and 280 to 281; these read GVR and SG.

Belongs to the IPP isomerase type 2 family. Homooctamer. Dimer of tetramers. The cofactor is FMN. It depends on NADPH as a cofactor. Requires Mg(2+) as cofactor.

The protein resides in the cytoplasm. The catalysed reaction is isopentenyl diphosphate = dimethylallyl diphosphate. Its function is as follows. Involved in the biosynthesis of isoprenoids. Catalyzes the 1,3-allylic rearrangement of the homoallylic substrate isopentenyl (IPP) to its allylic isomer, dimethylallyl diphosphate (DMAPP). This Lacticaseibacillus paracasei (strain ATCC 334 / BCRC 17002 / CCUG 31169 / CIP 107868 / KCTC 3260 / NRRL B-441) (Lactobacillus paracasei) protein is Isopentenyl-diphosphate delta-isomerase.